The sequence spans 277 residues: Myelin proteolipid protein (277 aa).

At 2-10 (GLLECCARC) the chain is on the cytoplasmic side. S-palmitoyl cysteine attachment occurs at residues C6, C7, and C10. A helical membrane pass occupies residues 11 to 36 (LIGAPFASLVATGLCFFGVALFCGCG). Topologically, residues 37-59 (HEALTGTEQLIETYFSKNYQDYE) are extracellular. Residues 60–88 (YLIDVIHAFQYVIYGTASFFFLYGALLLA) form a helical membrane-spanning segment. Over 89-151 (EGFYTTGAVR…LGKWLGHPDK (63 aa)) the chain is Cytoplasmic. 3 S-palmitoyl cysteine lipidation sites follow: C109, C139, and C141. A helical transmembrane segment spans residues 152–178 (FVGITYVLTIVWLLAFACSAVPVYIYF). The Extracellular portion of the chain corresponds to 179 to 238 (NTWTTCQSIAFPTKTTASIGTLCADARMYGVLPWNAFPGKVCGSNLLSICKTSEFQMTFH). Intrachain disulfides connect C184–C228 and C201–C220. T199 carries O-palmitoyl threonine lipidation. A helical transmembrane segment spans residues 239–268 (LFIAAFVGAAATLVSLLTFMIAATYNFAVL). The Cytoplasmic segment spans residues 269-277 (KLMGRGTKF).

The protein belongs to the myelin proteolipid protein family.

It is found in the cell membrane. This is the major myelin protein from the central nervous system. It plays an important role in the formation or maintenance of the multilamellar structure of myelin. The polypeptide is Myelin proteolipid protein (PLP1) (Gallus gallus (Chicken)).